The chain runs to 219 residues: NADH-ubiquinone oxidoreductase 23 kDa subunit, mitochondrial (219 aa).

4Fe-4S ferredoxin-type domains follow at residues 111 to 140 (RRYP…IEAE) and 150 to 179 (TRYD…ESPN). Cys120, Cys123, Cys126, Cys130, Cys159, Cys162, Cys165, and Cys169 together coordinate [4Fe-4S] cluster.

It belongs to the complex I 23 kDa subunit family. In terms of assembly, complex I is composed of about 40 different subunits. It depends on [4Fe-4S] cluster as a cofactor.

Its subcellular location is the mitochondrion. It catalyses the reaction a ubiquinone + NADH + 5 H(+)(in) = a ubiquinol + NAD(+) + 4 H(+)(out). Core subunit of the mitochondrial membrane respiratory chain NADH dehydrogenase (Complex I) that is believed to belong to the minimal assembly required for catalysis. Complex I functions in the transfer of electrons from NADH to the respiratory chain. The immediate electron acceptor for the enzyme is believed to be ubiquinone. May donate electrons to ubiquinone. This Neurospora crassa (strain ATCC 24698 / 74-OR23-1A / CBS 708.71 / DSM 1257 / FGSC 987) protein is NADH-ubiquinone oxidoreductase 23 kDa subunit, mitochondrial (nuo21.3c).